A 122-amino-acid chain; its full sequence is Fluoride-specific ion channel FluC 2 (122 aa).

4 helical membrane passes run 4–24 (VAVWVGVALIGGVGSVLRFVV), 38–58 (LGTLVVNLSGAALLGFLGGLA), 63–83 (AALLAGTAFVGAYTTFSTWML), and 96–116 (AALANIVVSVVLGGAAAFIGQ). Positions 73 and 76 each coordinate Na(+).

Belongs to the fluoride channel Fluc/FEX (TC 1.A.43) family.

It is found in the cell membrane. The enzyme catalyses fluoride(in) = fluoride(out). Its activity is regulated as follows. Na(+) is not transported, but it plays an essential structural role and its presence is essential for fluoride channel function. Functionally, fluoride-specific ion channel. Important for reducing fluoride concentration in the cell, thus reducing its toxicity. The chain is Fluoride-specific ion channel FluC 2 from Mycolicibacterium paratuberculosis (strain ATCC BAA-968 / K-10) (Mycobacterium paratuberculosis).